A 301-amino-acid chain; its full sequence is Ornithine carbamoyltransferase (301 aa).

Carbamoyl phosphate is bound by residues arginine 100 and 127–130 (HPCQ). L-ornithine-binding positions include asparagine 158, aspartate 221, and 225 to 226 (SM). Carbamoyl phosphate-binding positions include 260–261 (CL) and arginine 288.

This sequence belongs to the aspartate/ornithine carbamoyltransferase superfamily. OTCase family.

The protein localises to the cytoplasm. The catalysed reaction is carbamoyl phosphate + L-ornithine = L-citrulline + phosphate + H(+). It participates in amino-acid biosynthesis; L-arginine biosynthesis; L-arginine from L-ornithine and carbamoyl phosphate: step 1/3. Its function is as follows. Reversibly catalyzes the transfer of the carbamoyl group from carbamoyl phosphate (CP) to the N(epsilon) atom of ornithine (ORN) to produce L-citrulline. In Shewanella oneidensis (strain ATCC 700550 / JCM 31522 / CIP 106686 / LMG 19005 / NCIMB 14063 / MR-1), this protein is Ornithine carbamoyltransferase.